Here is a 350-residue protein sequence, read N- to C-terminus: THUMP domain-containing protein 1 (350 aa).

Polar residues predominate over residues 1 to 10 (MATTAQQSPQ). Disordered stretches follow at residues 1 to 42 (MATT…LEPG) and 75 to 96 (PEKFIDKDQQPSGSEGEDDDAE). The residue at position 2 (A2) is an N-acetylalanine. Phosphoserine occurs at positions 8, 86, 88, and 119. Positions 147–254 (DMYKTKKKKT…KAVCCLSVVK (108 aa)) constitute a THUMP domain. A Phosphoserine modification is found at S270. Residues 270–292 (SAKDSQPHPKLGNGKEAKLEPDS) show a composition bias toward basic and acidic residues. A disordered region spans residues 270–350 (SAKDSQPHPK…VPKTNENELS (81 aa)).

It belongs to the THUMPD1 family. In terms of assembly, interacts with NAT10. Binds tRNA.

In terms of biological role, functions as a tRNA-binding adapter to mediate NAT10-dependent tRNA acetylation modifying cytidine to N4-acetylcytidine (ac4C). This Mus musculus (Mouse) protein is THUMP domain-containing protein 1 (Thumpd1).